Here is a 287-residue protein sequence, read N- to C-terminus: Protoheme IX farnesyltransferase (287 aa).

The next 8 membrane-spanning stretches (helical) occupy residues 9-29 (IVTM…SATL), 31-51 (LIDW…AGAA), 94-114 (IILW…TWLI), 132-152 (VGAI…GGTL), 158-178 (WMLF…IAWL), 202-222 (AWQS…LAWF), 228-248 (VASA…WPLL), and 267-287 (LRWS…RASL).

This sequence belongs to the UbiA prenyltransferase family. Protoheme IX farnesyltransferase subfamily.

It localises to the cell inner membrane. The catalysed reaction is heme b + (2E,6E)-farnesyl diphosphate + H2O = Fe(II)-heme o + diphosphate. It functions in the pathway porphyrin-containing compound metabolism; heme O biosynthesis; heme O from protoheme: step 1/1. Its function is as follows. Converts heme B (protoheme IX) to heme O by substitution of the vinyl group on carbon 2 of heme B porphyrin ring with a hydroxyethyl farnesyl side group. In Rhodopirellula baltica (strain DSM 10527 / NCIMB 13988 / SH1), this protein is Protoheme IX farnesyltransferase.